Reading from the N-terminus, the 400-residue chain is Probable vacuolar protease A (400 aa).

An N-terminal signal peptide occupies residues 1-18 (MKGSLLLAGATLLGCTSA). Positions 19-72 (KLHSLKLKKVSLKEQLEHADIDVQIKSLGQKYMGIRPEQHEQQMFKEQTPIEAE) are cleaved as a propeptide — activation peptide. In terms of domain architecture, Peptidase A1 spans 87–397 (YFSEISIGTP…DLGKGTVGLA (311 aa)). Residue Asp-105 is part of the active site. A disulfide bridge connects residues Cys-118 and Cys-123. A glycan (N-linked (GlcNAc...) asparagine) is linked at Asn-140. Residue Asp-289 is part of the active site. Cys-323 and Cys-356 are oxidised to a cystine. N-linked (GlcNAc...) asparagine glycosylation occurs at Asn-340.

It belongs to the peptidase A1 family.

The protein resides in the vacuole lumen. Its subcellular location is the secreted. It catalyses the reaction Hydrolysis of proteins with broad specificity for peptide bonds. Cleaves -Leu-Leu-|-Val-Tyr- bond in a synthetic substrate. Does not act on esters of Tyr or Arg.. Functionally, vacuolar aspartic endopeptidase which is probably also secreted and contributes to virulence. The protein is Probable vacuolar protease A (PEP2) of Trichophyton verrucosum (strain HKI 0517).